Consider the following 1026-residue polypeptide: Multidrug resistance protein MdtC (1026 aa).

Helical transmembrane passes span 15–35, 333–353, 360–380, 387–407, 431–451, 463–483, 528–548, 853–873, 897–917, 953–973, and 984–1004; these read ILIA…LPVA, EVEE…FLFL, LIPA…MYLC, LSLM…IVVL, VGFT…PLLL, FAVT…TLTP, LVGV…IAIP, LILI…LYES, LFNA…IGIV, PIMM…LSGG, and ITIV…TPVV.

This sequence belongs to the resistance-nodulation-cell division (RND) (TC 2.A.6) family. MdtC subfamily. Part of a tripartite efflux system composed of MdtA, MdtB and MdtC. MdtC forms a heteromultimer with MdtB.

It localises to the cell inner membrane. The sequence is that of Multidrug resistance protein MdtC from Salmonella paratyphi A (strain AKU_12601).